The sequence spans 367 residues: MGEGSRRPSGMLMSVDLEPVQLVGPDGTPTAERRYHRDLPEETLRWLYEMMVVTRELDTEFVNLQRQGELALYTPCRGQEAAQVGAAACLRKTDWLFPQYRELGVYLVRGIPPGHVGVAWRGTWHGGLQFTTKCCAPMSVPIGTQTLHAVGAAMAAQRLDEDSVTVAFLGDGATSEGDVHEALNFAAVFTTPCVFYVQNNQWAISMPVSRQTAAPSIAHKAIGYGMPGIRVDGNDVLACYAVMAEAAARARAGDGPTLIEAVTYRLGPHTTADDPTRYRSQEEVDRWATLDPIPRYRTYLQDQGLWSQRLEEQVTARAKHVRSELRDAVFDAPDFDVDEVFTTVYAEITPGLQAQREQLRAELARTD.

Thiamine diphosphate-binding positions include 99–101 (QYR), 141–142 (PI), 170–176 (GDGATSE), 200–204 (NQWAI), and His269. Tyr100 is a substrate binding site. Positions 171 and 200 each coordinate Mg(2+).

As to quaternary structure, heteromer of E1 alpha (BkdA) and beta (BkdB) subunits. Part of the BCKADH complex, consisting of multiple copies of BkdA/BkdB (E1), BkdC (E2) and Lpd (E3). Requires Mg(2+) as cofactor. Thiamine diphosphate is required as a cofactor.

The enzyme catalyses N(6)-[(R)-lipoyl]-L-lysyl-[protein] + 3-methyl-2-oxobutanoate + H(+) = N(6)-[(R)-S(8)-2-methylpropanoyldihydrolipoyl]-L-lysyl-[protein] + CO2. Functionally, component of the branched-chain alpha-ketoacid dehydrogenase (BCKADH) complex, that catalyzes the overall conversion of branched-chain alpha-ketoacids to acyl-CoA and CO(2). The polypeptide is 3-methyl-2-oxobutanoate dehydrogenase subunit alpha (bkdA) (Mycobacterium tuberculosis (strain CDC 1551 / Oshkosh)).